A 155-amino-acid chain; its full sequence is Small ribosomal subunit protein uS7c (155 aa).

It belongs to the universal ribosomal protein uS7 family. Part of the 30S ribosomal subunit.

Its subcellular location is the plastid. It is found in the chloroplast. Functionally, one of the primary rRNA binding proteins, it binds directly to 16S rRNA where it nucleates assembly of the head domain of the 30S subunit. The sequence is that of Small ribosomal subunit protein uS7c (rps7) from Coelogyne cristata (Orchid).